The following is a 638-amino-acid chain: Neuroendocrine convertase 2 (638 aa).

Residues 1–25 (MKGGCVSQWKAAAGFLFCVMVFASA) form the signal peptide. Residues 26–109 (ERPVFTNHFL…QQEGFDRKKR (84 aa)) constitute a propeptide that is removed on maturation. The region spanning 129-453 (QWYLINTGQA…YGVLDAGAMV (325 aa)) is the Peptidase S8 domain. Active-site charge relay system residues include D167 and H208. 2 disulfides stabilise this stretch: C225–C376 and C317–C347. An N-linked (GlcNAc...) asparagine glycan is attached at N375. The active-site Charge relay system is S384. The P/Homo B domain occupies 461–597 (TVPERFHCVG…TLMLHGTQSA (137 aa)). C468 and C494 are oxidised to a cystine. Residues N514 and N524 are each glycosylated (N-linked (GlcNAc...) asparagine).

Belongs to the peptidase S8 family. Furin subfamily.

The protein resides in the cytoplasmic vesicle. The protein localises to the secretory vesicle. It is found in the secreted. The catalysed reaction is Release of protein hormones and neuropeptides from their precursors, generally by hydrolysis of -Lys-Arg-|- bonds.. Serine endopeptidase which is involved in the processing of hormone and other protein precursors at sites comprised of pairs of basic amino acid residues. Responsible for the release of glucagon from proglucagon in pancreatic A cells. This is Neuroendocrine convertase 2 (PCSK2) from Pongo abelii (Sumatran orangutan).